The primary structure comprises 123 residues: UPF0738 protein BcerKBAB4_1107 (123 aa).

It belongs to the UPF0738 family.

This is UPF0738 protein BcerKBAB4_1107 from Bacillus mycoides (strain KBAB4) (Bacillus weihenstephanensis).